Reading from the N-terminus, the 474-residue chain is Eukaryotic translation initiation factor 3 subunit L (474 aa).

One can recognise a PCI domain in the interval 255 to 449; it reads DAIRMFSHIL…DLDYALQGDL (195 aa).

This sequence belongs to the eIF-3 subunit L family. In terms of assembly, component of the eukaryotic translation initiation factor 3 (eIF-3) complex.

Its subcellular location is the cytoplasm. In terms of biological role, component of the eukaryotic translation initiation factor 3 (eIF-3) complex, which is involved in protein synthesis of a specialized repertoire of mRNAs and, together with other initiation factors, stimulates binding of mRNA and methionyl-tRNAi to the 40S ribosome. The eIF-3 complex specifically targets and initiates translation of a subset of mRNAs involved in cell proliferation. This Chaetomium globosum (strain ATCC 6205 / CBS 148.51 / DSM 1962 / NBRC 6347 / NRRL 1970) (Soil fungus) protein is Eukaryotic translation initiation factor 3 subunit L.